Consider the following 157-residue polypeptide: Peptide methionine sulfoxide reductase MsrA (157 aa).

Cysteine 10 is an active-site residue.

Belongs to the MsrA Met sulfoxide reductase family.

The enzyme catalyses L-methionyl-[protein] + [thioredoxin]-disulfide + H2O = L-methionyl-(S)-S-oxide-[protein] + [thioredoxin]-dithiol. It catalyses the reaction [thioredoxin]-disulfide + L-methionine + H2O = L-methionine (S)-S-oxide + [thioredoxin]-dithiol. Functionally, has an important function as a repair enzyme for proteins that have been inactivated by oxidation. Catalyzes the reversible oxidation-reduction of methionine sulfoxide in proteins to methionine. The polypeptide is Peptide methionine sulfoxide reductase MsrA (Clostridium botulinum (strain Kyoto / Type A2)).